The chain runs to 354 residues: Glycerol-1-phosphate dehydrogenase [NAD(P)+] (354 aa).

NAD(+) contacts are provided by residues 103–107 (GRAVD) and 125–128 (TAAS). Aspartate 130 contributes to the substrate binding site. Serine 134 serves as a coordination point for NAD(+). Aspartate 176 lines the substrate pocket. The Zn(2+) site is built by aspartate 176 and histidine 255. Histidine 259 is a binding site for substrate. Zn(2+) is bound at residue histidine 271.

Belongs to the glycerol-1-phosphate dehydrogenase family. In terms of assembly, homodimer. Requires Zn(2+) as cofactor.

The protein localises to the cytoplasm. It catalyses the reaction sn-glycerol 1-phosphate + NAD(+) = dihydroxyacetone phosphate + NADH + H(+). The catalysed reaction is sn-glycerol 1-phosphate + NADP(+) = dihydroxyacetone phosphate + NADPH + H(+). It participates in membrane lipid metabolism; glycerophospholipid metabolism. In terms of biological role, catalyzes the NAD(P)H-dependent reduction of dihydroxyacetonephosphate (DHAP or glycerone phosphate) to glycerol 1-phosphate (G1P). The G1P thus generated is used as the glycerophosphate backbone of phospholipids in the cellular membranes of Archaea. The polypeptide is Glycerol-1-phosphate dehydrogenase [NAD(P)+] (Cenarchaeum symbiosum (strain A)).